The sequence spans 37 residues: Large ribosomal subunit protein bL36c (37 aa).

This sequence belongs to the bacterial ribosomal protein bL36 family.

The protein resides in the plastid. The protein localises to the chloroplast. In Cryptomeria japonica (Japanese cedar), this protein is Large ribosomal subunit protein bL36c.